Here is a 332-residue protein sequence, read N- to C-terminus: MASGLVRLLQQGPRCLLAPVAPKLVPPVRGVKRGFRAAFRFQKELERQRLLRCPPPPVRRSEKPNWDYHAEIQAFGHRLQENFSLDLLKTAFVNSCYIKSEEAKRQQLGIEKEAVLLNLKSNQELSEQGTSFSQTCLTQFLEDEYPDLPTEGIKNLVEFLTGEDVVCHVARNLAVEQLTLSEEFPVPPTVLQQTFFAVIGALLQSSGPERTALFIRDFLITQMTGKELFEMWKIINPMGLLVEELKKRNISAPESRLTRQSGGTTALPLYFVGLYCDKKLIAEGPGETVLVAEEEAARVALRKLYGFTENRRPWNYSKPKETLRAEKSITAS.

The transit peptide at 1–30 (MASGLVRLLQQGPRCLLAPVAPKLVPPVRG) directs the protein to the mitochondrion. The RNase III domain occupies 86-228 (DLLKTAFVNS…LITQMTGKEL (143 aa)). One can recognise a DRBM domain in the interval 236-306 (NPMGLLVEEL…ARVALRKLYG (71 aa)).

Belongs to the ribonuclease III family. Mitochondrion-specific ribosomal protein mL44 subfamily. Component of the mitochondrial ribosome large subunit (39S) which comprises a 16S rRNA and about 50 distinct proteins.

The protein localises to the mitochondrion. In terms of biological role, component of the 39S subunit of mitochondrial ribosome. May have a function in the assembly/stability of nascent mitochondrial polypeptides exiting the ribosome. This chain is Large ribosomal subunit protein mL44 (MRPL44), found in Pongo abelii (Sumatran orangutan).